The primary structure comprises 916 residues: Major intrinsically disordered Notch2-binding receptor 1 (916 aa).

The Cytoplasmic segment spans residues 1-891 (METSQETSLF…AEFRRAKVCK (891 aa)). Disordered stretches follow at residues 390-409 (EEKL…PAPE), 553-591 (KSDC…SEEE), 648-675 (SLTS…GPKL), 705-726 (TRPS…IASI), and 745-782 (NEEE…LPKQ). Composition is skewed to basic and acidic residues over residues 553–564 (KSDCDSSPEHNL) and 575–591 (KGDK…SEEE). The residue at position 711 (serine 711) is a Phosphoserine. Over residues 750–771 (KDTGPGDNKDWHRKSKEADRQY) the composition is skewed to basic and acidic residues. The helical transmembrane segment at 892-912 (IAALIAAAACTVILVIVVPIC) threads the bilayer. Over 913–916 (TMKS) the chain is Extracellular.

This sequence belongs to the MINAR family. Interacts with NOTCH2; this interaction increases MINAR1 stability. Interacts (via N-terminus) with DEPTOR (via PDZ domain); this interaction may stabilize DEPTOR protein by impairing its ubiquitination. As to expression, widely expressed, including in breast epithelial cells and endothelial cells (at protein level). Expression is down-regulated in advanced breast tumors (at protein level).

It localises to the cell membrane. Its function is as follows. Intrinsically disordered protein which may negatively regulate mTOR signaling pathway by stabilizing the mTOR complex component DEPTOR. Negatively regulates angiogenesis. Negatively regulates cell growth. Negatively regulates neurite outgrowth in hippocampal neurons. The chain is Major intrinsically disordered Notch2-binding receptor 1 from Homo sapiens (Human).